The chain runs to 97 residues: Mitochondrial import inner membrane translocase subunit Tim8 A (97 aa).

The Twin CX3C motif signature appears at 43-66; the sequence is CWEKCMDKPGPKLDSRAEACFVNC. 2 disulfide bridges follow: Cys-43/Cys-66 and Cys-47/Cys-62. Ser-57, Ser-87, Ser-94, and Ser-96 each carry phosphoserine.

Belongs to the small Tim family. Heterohexamer; composed of 3 copies of TIMM8A and 3 copies of TIMM13, named soluble 70 kDa complex. Associates with the TIM22 complex, whose core is composed of TIMM22.

It is found in the mitochondrion inner membrane. Its function is as follows. Mitochondrial intermembrane chaperone that participates in the import and insertion of some multi-pass transmembrane proteins into the mitochondrial inner membrane. Also required for the transfer of beta-barrel precursors from the TOM complex to the sorting and assembly machinery (SAM complex) of the outer membrane. Acts as a chaperone-like protein that protects the hydrophobic precursors from aggregation and guide them through the mitochondrial intermembrane space. The TIMM8-TIMM13 complex mediates the import of proteins such as TIMM23, SLC25A12/ARALAR1 and SLC25A13/ARALAR2, while the predominant TIMM9-TIMM10 70 kDa complex mediates the import of much more proteins. This is Mitochondrial import inner membrane translocase subunit Tim8 A (TIMM8A) from Bos taurus (Bovine).